The sequence spans 255 residues: tRNA (guanine-N(1)-)-methyltransferase (255 aa).

Residues Gly-119 and 139–144 each bind S-adenosyl-L-methionine; that span reads IGDFIL.

It belongs to the RNA methyltransferase TrmD family. In terms of assembly, homodimer.

The protein resides in the cytoplasm. It carries out the reaction guanosine(37) in tRNA + S-adenosyl-L-methionine = N(1)-methylguanosine(37) in tRNA + S-adenosyl-L-homocysteine + H(+). Its function is as follows. Specifically methylates guanosine-37 in various tRNAs. The sequence is that of tRNA (guanine-N(1)-)-methyltransferase from Pseudoalteromonas translucida (strain TAC 125).